A 31-amino-acid chain; its full sequence is MSDIN-like toxin proprotein 4 (31 aa).

Positions 1–10 are excised as a propeptide; sequence MSDINGTRLP. Positions 11 to 16 form a cross-link, cyclopeptide (Trp-Pro); the sequence is WLATCP. Positions 17–31 are excised as a propeptide; it reads CVGEDVNPTLSRGER.

It belongs to the MSDIN fungal toxin family. Post-translationally, processed by the macrocyclase-peptidase enzyme POPB to yield a toxic cyclic hexapeptide. POPB first removes 10 residues from the N-terminus. Conformational trapping of the remaining peptide forces the enzyme to release this intermediate rather than proceed to macrocyclization. The enzyme rebinds the remaining peptide in a different conformation and catalyzes macrocyclization of the N-terminal 6 residues.

Its function is as follows. Probable toxin that belongs to the MSDIN-like toxin family responsible for a large number of food poisoning cases and deaths. In Amanita phalloides (Death cap), this protein is MSDIN-like toxin proprotein 4.